The chain runs to 280 residues: UPF0273 protein SSO1861 (280 aa).

The KaiC domain occupies 2–246 (KRVKTYIPGL…YLKISNWSVS (245 aa)). 29-36 (GGPGTGKS) contacts ATP.

It belongs to the UPF0273 family.

The protein is UPF0273 protein SSO1861 of Saccharolobus solfataricus (strain ATCC 35092 / DSM 1617 / JCM 11322 / P2) (Sulfolobus solfataricus).